Consider the following 322-residue polypeptide: MTYARITGTGGCLPEKILTNHDLEKMVETTDEWIQERTGIKKRHVAGPEETTCDLAERAARRAMEMAGRSSADIDLIIVATTTPDRVFPSTACLLQKRLEIHGCAAFDVQAVCTGFVYALGVADRFIRTGGAKCALVVGAETLSRIVDWTDRTTCVLFGDGAGAVVLEASEEQGILSTHLHADGRFDNLLHVPKGISTAYSEVLAGEAYIEMKGNEVFKVAVNTLGRIVDETLEYNDIDQAEIDWLIPHQANIRIIQATARKLKMPMDRVVVTVDEHGNTSAASIPLALDVAVRDGRVRPGDLLMMEAFGGGFTWGSALLRF.

Residues C113 and H249 contribute to the active site. Residues 250 to 254 form an ACP-binding region; that stretch reads QANIR. N279 is a catalytic residue.

It belongs to the thiolase-like superfamily. FabH family. Homodimer.

Its subcellular location is the cytoplasm. It carries out the reaction malonyl-[ACP] + acetyl-CoA + H(+) = 3-oxobutanoyl-[ACP] + CO2 + CoA. The protein operates within lipid metabolism; fatty acid biosynthesis. Catalyzes the condensation reaction of fatty acid synthesis by the addition to an acyl acceptor of two carbons from malonyl-ACP. Catalyzes the first condensation reaction which initiates fatty acid synthesis and may therefore play a role in governing the total rate of fatty acid production. Possesses both acetoacetyl-ACP synthase and acetyl transacylase activities. Its substrate specificity determines the biosynthesis of branched-chain and/or straight-chain of fatty acids. This Thioalkalivibrio sulfidiphilus (strain HL-EbGR7) protein is Beta-ketoacyl-[acyl-carrier-protein] synthase III.